A 583-amino-acid chain; its full sequence is NudC domain-containing protein 1 (583 aa).

The residue at position 8 (Ser8) is a Phosphoserine. The 89-residue stretch at 273 to 361 (IKEPLYYWQQ…NEGLTWPELV (89 aa)) folds into the CS domain. Phosphoserine is present on Ser388.

Isoform 1 is specifically expressed in leukemias and a variety of solid tumor cell lines and is also detected in testis and heart. Isoform 2 is predominantly expressed in testis and weakly expressed in tumor cells.

Its subcellular location is the cytoplasm. The protein localises to the nucleus. The sequence is that of NudC domain-containing protein 1 from Homo sapiens (Human).